We begin with the raw amino-acid sequence, 281 residues long: Nicotinamide/nicotinic acid mononucleotide adenylyltransferase 1 (281 aa).

Beta-nicotinamide D-ribonucleotide-binding residues include G15 and S16. NAD(+) contacts are provided by G15, S16, F17, and M23. Residue 15–17 (GSF) coordinates ATP. H24 serves as a coordination point for ATP. Beta-nicotinamide D-ribonucleotide-binding residues include Y55 and K57. Residue K57 participates in NAD(+) binding. ATP is bound at residue K58. Beta-nicotinamide D-ribonucleotide contacts are provided by W92 and T95. NAD(+) is bound by residues W92 and T95. Residues 113-143 (PQQNSPVLEKPGRKRKWAEQKQDISEKKSLE) form a disordered region. S117 is subject to Phosphoserine. The Nuclear localization signal signature appears at 123-129 (PGRKRKW). Basic and acidic residues predominate over residues 129-143 (WAEQKQDISEKKSLE). NAD(+) contacts are provided by G158, D160, L170, W171, E217, and N221. 158–160 (GAD) lines the ATP pocket. Positions 170 and 171 each coordinate beta-nicotinamide D-ribonucleotide. 226 to 229 (TKIR) contacts ATP.

It belongs to the eukaryotic NMN adenylyltransferase family. In terms of assembly, homohexamer. Interacts with ADPRT/PARP1. The cofactor is Zn(2+). It depends on Mg(2+) as a cofactor.

The protein resides in the nucleus. The catalysed reaction is beta-nicotinamide D-ribonucleotide + ATP + H(+) = diphosphate + NAD(+). It carries out the reaction nicotinate beta-D-ribonucleotide + ATP + H(+) = deamido-NAD(+) + diphosphate. The protein operates within cofactor biosynthesis; NAD(+) biosynthesis; NAD(+) from nicotinamide D-ribonucleotide: step 1/1. Its pathway is cofactor biosynthesis; NAD(+) biosynthesis; deamido-NAD(+) from nicotinate D-ribonucleotide: step 1/1. Its activity is regulated as follows. Activity is strongly inhibited by galotannin. Inhibited by P1-(adenosine-5')-P4-(nicotinic-acid-riboside-5')-tetraphosphate (Nap4AD). Its function is as follows. Catalyzes the formation of NAD(+) from nicotinamide mononucleotide (NMN) and ATP. Can also use the deamidated form; nicotinic acid mononucleotide (NaMN) as substrate with the same efficiency. Can use triazofurin monophosphate (TrMP) as substrate. Also catalyzes the reverse reaction, i.e. the pyrophosphorolytic cleavage of NAD(+). For the pyrophosphorolytic activity, prefers NAD(+) and NaAD as substrates and degrades NADH, nicotinic acid adenine dinucleotide phosphate (NHD) and nicotinamide guanine dinucleotide (NGD) less effectively. Involved in the synthesis of ATP in the nucleus, together with PARP1, PARG and NUDT5. Nuclear ATP generation is required for extensive chromatin remodeling events that are energy-consuming. Fails to cleave phosphorylated dinucleotides NADP(+), NADPH and NaADP(+). Also acts as a cofactor for glutamate and aspartate ADP-ribosylation by directing PARP1 catalytic activity to glutamate and aspartate residues on histones. Protects against axonal degeneration following mechanical or toxic insults. Delays axonal degeneration after axotomy. Results in a &gt;10-fold increase in intact neurites 72 hours after injury. Neural protection does not correlate with cellular NAD(+) levels but may still require enzyme activity. This chain is Nicotinamide/nicotinic acid mononucleotide adenylyltransferase 1 (NMNAT1), found in Bos taurus (Bovine).